The primary structure comprises 318 residues: Decaprenyl-phosphate phosphoribosyltransferase (318 aa).

2 helical membrane-spanning segments follow: residues 33–53 (WIKN…GIEY) and 59–79 (AAKV…IYLI). 2 residues coordinate 5-phospho-alpha-D-ribose 1-diphosphate: Lys35 and Tyr77. Positions 80 and 84 each coordinate Mg(2+). Lys94 provides a ligand contact to 5-phospho-alpha-D-ribose 1-diphosphate. A run of 2 helical transmembrane segments spans residues 99–119 (IAAG…LAVA) and 121–141 (LVIS…YIAV). 2 residues coordinate 5-phospho-alpha-D-ribose 1-diphosphate: Lys150 and Arg167. A run of 2 helical transmembrane segments spans residues 153 to 173 (AVLD…AGGV) and 177 to 197 (IPLS…MAAG). Lys198 is a binding site for trans,octa-cis-decaprenyl phosphate. Transmembrane regions (helical) follow at residues 225-245 (LRFV…LWAF), 262-282 (SWYA…AVDI), and 298-318 (RVLQ…IYFS).

The protein belongs to the UbiA prenyltransferase family. DPPR synthase subfamily. It depends on Mg(2+) as a cofactor.

The protein localises to the cell inner membrane. It carries out the reaction trans,octa-cis-decaprenyl phosphate + 5-phospho-alpha-D-ribose 1-diphosphate + H(+) = trans,octa-cis-decaprenylphospho-beta-D-ribofuranose 5-phosphate + diphosphate. It functions in the pathway cell wall biogenesis; cell wall polysaccharide biosynthesis. Its function is as follows. Involved in the biosynthesis of decaprenylphosphoryl arabinose (DPA) a precursor for arabinan synthesis in mycobacterial cell wall biosynthesis. Catalyzes the transfer of a 5-phosphoribosyl residue from phosphoribose diphosphate (PRPP) to decaprenyl phosphate (DP) to form decaprenylphosphoryl-5-phosphoribose (DPPR). This is Decaprenyl-phosphate phosphoribosyltransferase from Mycolicibacterium smegmatis (strain ATCC 700084 / mc(2)155) (Mycobacterium smegmatis).